Reading from the N-terminus, the 93-residue chain is Leydig cell tumor 10 kDa protein (93 aa).

Residues 1 to 41 (MAQGQRKFQAQKPKSKAAAAERSRGPRKGGRVIGPKKARVV) form a disordered region. Low complexity predominate over residues 7–18 (KFQAQKPKSKAA). The segment covering 25–39 (GPRKGGRVIGPKKAR) has biased composition (basic residues).

The protein belongs to the UPF0390 family. As to expression, leydig cell tumor, testis and placenta.

In terms of biological role, may have a potential role in hypercalcemia of malignancy. The protein is Leydig cell tumor 10 kDa protein of Rattus norvegicus (Rat).